Consider the following 333-residue polypeptide: DNA primase small subunit PriS (333 aa).

Residues Asp96, Asp98, and Asp237 contribute to the active site.

It belongs to the eukaryotic-type primase small subunit family. Heterodimer of a small subunit (PriS) and a large subunit (PriL). Requires Mg(2+) as cofactor. Mn(2+) is required as a cofactor.

Functionally, catalytic subunit of DNA primase, an RNA polymerase that catalyzes the synthesis of short RNA molecules used as primers for DNA polymerase during DNA replication. The small subunit contains the primase catalytic core and has DNA synthesis activity on its own. Binding to the large subunit stabilizes and modulates the activity, increasing the rate of DNA synthesis while decreasing the length of the DNA fragments, and conferring RNA synthesis capability. The DNA polymerase activity may enable DNA primase to also catalyze primer extension after primer synthesis. May also play a role in DNA repair. The protein is DNA primase small subunit PriS of Thermoplasma volcanium (strain ATCC 51530 / DSM 4299 / JCM 9571 / NBRC 15438 / GSS1).